The sequence spans 688 residues: Glycine--tRNA ligase beta subunit (688 aa).

The protein belongs to the class-II aminoacyl-tRNA synthetase family. In terms of assembly, tetramer of two alpha and two beta subunits.

The protein resides in the cytoplasm. The catalysed reaction is tRNA(Gly) + glycine + ATP = glycyl-tRNA(Gly) + AMP + diphosphate. This chain is Glycine--tRNA ligase beta subunit, found in Listeria monocytogenes serotype 4b (strain CLIP80459).